A 203-amino-acid chain; its full sequence is Calcineurin B-like protein 5 (203 aa).

Gly2 carries the N-myristoyl glycine lipid modification. EF-hand domains follow at residues 30 to 65 (EVEV…KNTK), 66 to 101 (KRSL…FHPN), 103 to 138 (SPRD…VLEE), and 147 to 182 (IIDS…YPLT).

Belongs to the calcineurin regulatory subunit family. As to quaternary structure, homodimer. Interacts with PP2CA, CIPK2, CIPK11, CIPK23 and CIPK24. Post-translationally, both N-myristoylation and calcium-mediated conformational changes are essential for its function. Expressed in green tissues, but not in the roots.

Its subcellular location is the cytoplasm. The protein resides in the nucleus. In terms of biological role, acts as a calcium sensor. CBL proteins interact with CIPK serine-threonine protein kinases. Binding of a CBL protein to the regulatory NAF domain of a CIPK protein lead to the activation of the kinase in a calcium-dependent manner. May function as a positive regulator of salt or drought responses. This chain is Calcineurin B-like protein 5 (CBL5), found in Arabidopsis thaliana (Mouse-ear cress).